A 105-amino-acid chain; its full sequence is Co-chaperonin GroES (105 aa).

Belongs to the GroES chaperonin family. Heptamer of 7 subunits arranged in a ring. Interacts with the chaperonin GroEL.

It is found in the cytoplasm. Together with the chaperonin GroEL, plays an essential role in assisting protein folding. The GroEL-GroES system forms a nano-cage that allows encapsulation of the non-native substrate proteins and provides a physical environment optimized to promote and accelerate protein folding. GroES binds to the apical surface of the GroEL ring, thereby capping the opening of the GroEL channel. In Parvibaculum lavamentivorans (strain DS-1 / DSM 13023 / NCIMB 13966), this protein is Co-chaperonin GroES.